Consider the following 200-residue polypeptide: MLAFCRSSLKSKKYFIILLALAAIAGLGTHAAWSSNGLPRIDNKTLARLAQQHPVVVLFRHAERCDRSTNQCLSDKTGITVKGTQDARELGNAFSADIPDFDLYSSNTVRTIQSATWFSAGKKLTVDKRLLQCGNEIYSAIKDLQSKAPDKNIVIFTHNHCLTYIAKDKRDATFKPDYLDGLVMHVEKGKVYLDGEFVNH.

Positions 1 to 25 (MLAFCRSSLKSKKYFIILLALAAIA) are cleaved as a signal peptide.

This sequence belongs to the phosphoglycerate mutase family. Ais subfamily.

It localises to the periplasm. The protein operates within bacterial outer membrane biogenesis; lipopolysaccharide metabolism. Functionally, catalyzes the dephosphorylation of heptose(II) of the outer membrane lipopolysaccharide core. This is Lipopolysaccharide core heptose(II)-phosphate phosphatase from Escherichia coli O17:K52:H18 (strain UMN026 / ExPEC).